A 288-amino-acid polypeptide reads, in one-letter code: Cell division protein ZipA (288 aa).

Methionine 1 is a topological domain (periplasmic). Residues 2–22 (EIGLREWLIVIGIIVIAGILF) form a helical membrane-spanning segment. Residues 23–288 (DGWRRMRGGK…FERRALTQKR (266 aa)) lie on the Cytoplasmic side of the membrane. 2 stretches are compositionally biased toward basic and acidic residues: residues 66 to 75 (KEPQLDEHDL) and 83 to 93 (REAREPRESGS). A disordered region spans residues 66 to 141 (KEPQLDEHDL…AKSSPAVADK (76 aa)). Over residues 106-117 (GDLNLDLDLDGG) the composition is skewed to low complexity.

It belongs to the ZipA family. As to quaternary structure, interacts with FtsZ via their C-terminal domains.

It localises to the cell inner membrane. Essential cell division protein that stabilizes the FtsZ protofilaments by cross-linking them and that serves as a cytoplasmic membrane anchor for the Z ring. Also required for the recruitment to the septal ring of downstream cell division proteins. This chain is Cell division protein ZipA, found in Pseudomonas fluorescens (strain Pf0-1).